Consider the following 27-residue polypeptide: Cysteine-rich venom protein tropirin (27 aa).

The protein belongs to the CRISP family. Contains 8 disulfide bonds. In terms of tissue distribution, expressed by the venom gland.

It is found in the secreted. Functionally, blocks contraction of smooth muscle elicited by high potassium-induced depolarization, but does not block caffeine-stimulated contraction. May target voltage-gated calcium channels on smooth muscle. In Tropidechis carinatus (Australian rough-scaled snake), this protein is Cysteine-rich venom protein tropirin.